Consider the following 410-residue polypeptide: Probable inactive allantoicase (410 aa).

Belongs to the allantoicase family.

The function of this enzyme is unclear as allantoicase activity is not known to exist in mammals. This is Probable inactive allantoicase (ALLC) from Macaca fascicularis (Crab-eating macaque).